The primary structure comprises 145 residues: 3-hydroxyacyl-[acyl-carrier-protein] dehydratase FabZ (145 aa).

Residue histidine 47 is part of the active site.

Belongs to the thioester dehydratase family. FabZ subfamily.

It localises to the cytoplasm. It catalyses the reaction a (3R)-hydroxyacyl-[ACP] = a (2E)-enoyl-[ACP] + H2O. In terms of biological role, involved in unsaturated fatty acids biosynthesis. Catalyzes the dehydration of short chain beta-hydroxyacyl-ACPs and long chain saturated and unsaturated beta-hydroxyacyl-ACPs. The chain is 3-hydroxyacyl-[acyl-carrier-protein] dehydratase FabZ from Acidovorax sp. (strain JS42).